Here is a 774-residue protein sequence, read N- to C-terminus: Lon protease 1 (774 aa).

The Lon N-terminal domain maps to 9 to 202; that stretch reads IPLLPLRGLL…KVIDFINNEK (194 aa). ATP is bound at residue 354 to 361; the sequence is GPPGVGKT. Residues 590–771 form the Lon proteolytic domain; the sequence is EDQVGVVTGL…DEVLEHALVG (182 aa). Residues S677 and K720 contribute to the active site.

This sequence belongs to the peptidase S16 family. Homohexamer. Organized in a ring with a central cavity. Exists as a mixture of small oligomeric species in solution.

It is found in the cytoplasm. The catalysed reaction is Hydrolysis of proteins in presence of ATP.. ATP-dependent serine protease that mediates the selective degradation of mutant and abnormal proteins as well as certain short-lived regulatory proteins. Required for cellular homeostasis and for survival from DNA damage and developmental changes induced by stress. Degrades polypeptides processively to yield small peptide fragments that are 5 to 10 amino acids long. Binds to DNA in a double-stranded, site-specific manner. Has been implicated in preventing sigma(G) activity under non-sporulation conditions. This Bacillus subtilis (strain 168) protein is Lon protease 1.